Reading from the N-terminus, the 233-residue chain is RNA/RNP complex-1-interacting phosphatase homolog (233 aa).

The span at 1–14 (MSNYHHNHNYQHRP) shows a compositional bias: basic residues. Residues 1–21 (MSNYHHNHNYQHRPRGYERLP) form a disordered region. The Tyrosine-protein phosphatase domain maps to 34–206 (NVGRDIDGTR…LYEAERKKKY (173 aa)). The active-site Phosphocysteine intermediate is cysteine 150. 151–156 (THGLNR) provides a ligand contact to substrate. The active-site Proton donor/acceptor is the arginine 156. The segment at 204 to 233 (KKYGKSSGKSSGNSADSTISSEQLHRNNSQ) is disordered. Low complexity predominate over residues 208-217 (KSSGKSSGNS). The span at 218–233 (ADSTISSEQLHRNNSQ) shows a compositional bias: polar residues.

Belongs to the protein-tyrosine phosphatase family. Non-receptor class dual specificity subfamily. As to quaternary structure, interacts with the ERI/DICER complex component dcr-1. Interacts with ERI/DICER complex components rrf-3 and isoform b of eri-1. Interacts with drh-3 and rde-8.

It localises to the cytoplasm. The protein resides in the nucleus. Functionally, RNA polyphosphatase which has RNA 5'-triphosphatase and diphosphatase activities. Displays poor protein-tyrosine phosphatase activity. Binds to 5'-triphosphorylated RNAs (also called ppp-RNAs). Dephosphorylates ppp-RNAs converting them to 5'-monophosphorylated RNAs (also called p-RNAs). During small-RNA-mediated gene-silencing or RNA interference (RNAi), involved in the dcr-1-mediated processing of an amplified dsRNA intermediate. This is most likely in association with several components of the ERI/DICER complex including dcr-1, eri-1 and rrf-3. Plays a role in the biogenesis of 26G small interfering RNAs (26G-siRNAs), which are a class of 26 nucleotide siRNAs that possess a guanine residue at the 5'-end, by dephosphorylating 5'-triphosphorylated 26G-siRNAs prior to their maturation by the ERI/DICER complex. Plays a role in the biogenesis of csr-1-bound 22G small interfering RNAs (22G-siRNAs), which are a class of 22 nucleotide siRNAs that possess a guanine residue at the 5'-end. Not required for the biogenesis of microRNAs (miRNA) or for the biogenesis of a class of 21 nucleotide PIWI-interacting RNAs (piRNAs) that possess a uracil residue at the 5'-end (also called 21U-RNAs). The polypeptide is RNA/RNP complex-1-interacting phosphatase homolog (Caenorhabditis elegans).